A 550-amino-acid polypeptide reads, in one-letter code: Chaperonin GroEL (550 aa).

ATP is bound by residues 30–33 (TLGP), Lys-51, 87–91 (DGTTT), Gly-415, and Asp-495.

It belongs to the chaperonin (HSP60) family. Forms a cylinder of 14 subunits composed of two heptameric rings stacked back-to-back. Interacts with the co-chaperonin GroES.

It is found in the cytoplasm. It catalyses the reaction ATP + H2O + a folded polypeptide = ADP + phosphate + an unfolded polypeptide.. Its function is as follows. Together with its co-chaperonin GroES, plays an essential role in assisting protein folding. The GroEL-GroES system forms a nano-cage that allows encapsulation of the non-native substrate proteins and provides a physical environment optimized to promote and accelerate protein folding. This Shewanella woodyi (strain ATCC 51908 / MS32) protein is Chaperonin GroEL.